Consider the following 319-residue polypeptide: F-box only protein 8 (319 aa).

One can recognise an F-box domain in the interval 68 to 111 (FINLEMLPPELSFTILSYLNATDLCLASCVWQDLANDELLWQGL). Residues 146–276 (FNANPDEGVN…LILLSIDLTS (131 aa)) enclose the SEC7 domain.

May promote guanine-nucleotide exchange on an ARF. Promotes the activation of ARF through replacement of GDP with GTP (Potential). This Bos taurus (Bovine) protein is F-box only protein 8 (FBXO8).